The primary structure comprises 481 residues: Phosphatidylinositol 4-kinase type 2-beta (481 aa).

The segment covering 1 to 11 (MEDPSEPDRLA) has biased composition (basic and acidic residues). Residues 1 to 82 (MEDPSEPDRL…VSRSSSAELD (82 aa)) are disordered. Phosphoserine occurs at positions 12, 17, and 45. Residues 53–64 (AGEEGEAGDEEL) are compositionally biased toward acidic residues. One can recognise a PI3K/PI4K catalytic domain in the interval 120–451 (GIFPERISQG…VQIPCVIVER (332 aa)). The segment at 126–132 (ISQGSSG) is G-loop. Residues Ser133 and Lys148 each coordinate ATP. Residues 153 to 155 (EPY) are important for substrate binding. An important for interaction with membranes region spans residues 161 to 174 (KWTKYVHKVCCPCC). Residues 257 to 260 (QLFV) and 271 to 272 (RK) each bind ATP. The tract at residues 264 to 272 (KEAEYWLRK) is important for interaction with membranes. A catalytic loop region spans residues 301–309 (RNTDRGNDN). The tract at residues 342–362 (AIDNGLAFPFKHPDEWRAYPF) is activation loop. Asp344 serves as a coordination point for ATP. Residues 357–366 (WRAYPFHWAW) form an important for interaction with membranes region.

It belongs to the PI3/PI4-kinase family. Type II PI4K subfamily. Widely expressed.

It is found in the cytoplasm. Its subcellular location is the cytosol. The protein localises to the golgi apparatus membrane. The protein resides in the endoplasmic reticulum membrane. It localises to the cell membrane. It is found in the early endosome membrane. The enzyme catalyses a 1,2-diacyl-sn-glycero-3-phospho-(1D-myo-inositol) + ATP = a 1,2-diacyl-sn-glycero-3-phospho-(1D-myo-inositol 4-phosphate) + ADP + H(+). With respect to regulation, inhibited by phenylarsine oxide and adenosine. Activation through membrane association is stimulated by active RAC1. In terms of biological role, together with PI4K2A and the type III PI4Ks (PIK4CA and PIK4CB) it contributes to the overall PI4-kinase activity of the cell. This contribution may be especially significant in plasma membrane, endosomal and Golgi compartments. The phosphorylation of phosphatidylinositol (PI) to PI4P is the first committed step in the generation of phosphatidylinositol 4,5-bisphosphate (PIP2), a precursor of the second messenger inositol 1,4,5-trisphosphate (InsP3). Contributes to the production of InsP3 in stimulated cells and is likely to be involved in the regulation of vesicular trafficking. This Homo sapiens (Human) protein is Phosphatidylinositol 4-kinase type 2-beta (PI4K2B).